The sequence spans 1362 residues: MGGKNKKNRHGSSTAVQGATAAANRPRAAAEPRPGGEDAAKKQTPRNSNVAPGSKESNKQGPKTYSFASSSDSGVSVNHDKSVLKVVIEAKLEKRIISLINEHKKLNSNKGTVSGRLTSKKLQDLYMALQKLSFKAEHIEEAMTNTVLYGGDLHAALDWLCLNLPDDALPEGFSQQFVEEEQRARAKFQAPPQRPSAANESATEKGEEGASLKGNPELTMKEWILRYAEQGSDDDDDDDDVKEEEKETTLEKFDPNERYLELTAKLLDARAQATATKQDKDKQGQKEAQERIRGYQQEMKSLEDHPLFNPAVKIPEVKSESKQPKPALPPSEDEPLNFNLFEKKENAPEEKAKKKPPLDIRNFDYTSRSWTGKSPKQFLIDWCRKHYSKSPNPSFEKVPVGKYWKSRVKIIKSHDDVMCVCPTIVTEDSMQAQHLAATLALYELTKGQSVHQLLPPTYRNVWLEWSDAEKQVQEQNKTESNKPRDQFITKLLNKLKVQQNQLKSCSQTQMMEDPEDSWENLACDEEQHETCPSPLLPDDLEPIRNIFRKSRDSMKYKRLLNDREQLPVFARGNFILETLKRHRVIVVAGETGSGKSTQVPQFLLEDLLFNGGSPGKCNIVCTQPRRISAMSLATRVCEELGCDSGPGGKNSLCGYQIRMESRTGEATRLLYCTTGILLRKLQEDSMLKNISHIIVDEVHERTVQSDFLLIILREILHKRSDLHLVLMSATVDCEKFSSYFTHCPIIRISGRTFPVEVFHLEDVVEATGFVLEQDSEYCQKFLEDEEEITLSVTGKGGSSKKYQEFIPAQSGTGLDLGARYQRYSSQTRHAVLYMNPNKINLDLILELLVFLDISPEYRNVEGAVLIFLPGLADIQQLYDILSSDKRFHDRRRYKLIALHSILSSQDQAEAFILPPAGTRKIVLATNIAETGITIPDVVFVIDAGRTKENRYHESSQMSSLVETFISKASALQRQGRAGRVRNGYCFRLYTRERFESFMEYSVPEILRVPLEELCLHIMKCDLGSPEDFLSKALDPPQLQVISNAMSLLRKIGACELSQPKLTPLGQHLAALPVNVKIGKMLIFGAIFGCLDAVATLAATMTEKSPFVTPIGEKDRADLAKSSMAVANSDHVTIFRAYLGWKAIRPEGYAAEMSYCRKNFLNRKALLTIEDVKQELIRLVRAAGFECPRSVEANGLSSAMKALSAEETSLLKAILTAGLYDNVGKILFTKSVDITEKLACIVETAQGKAQVHPSSVNRDLQIYGWLLYQEKVKYSKVFLRETTLISPFPVLLFGGDIAVQHRERLLTVDDWIHFQAPVKIAVIFKELRILIESVLKQKLENPKMSLKDDMILNIIKELIKTER.

Positions Met1 to His10 are enriched in basic residues. The interval Met1–Ser76 is disordered. The segment covering Gly18–Arg27 has biased composition (low complexity). Over residues Ala28–Lys41 the composition is skewed to basic and acidic residues. A compositionally biased stretch (low complexity) spans Ser66–Ser76. A coiled-coil region spans residues Glu89 to Asn109. Disordered regions lie at residues Gln182–Asn215 and Glu229–Glu257. Residues Gly231–Lys242 show a composition bias toward acidic residues. Residues Glu243 to Glu257 are compositionally biased toward basic and acidic residues. Positions Gln285 to His305 form a coiled coil. The tract at residues Val317–Leu336 is disordered. A Helicase ATP-binding domain is found at Leu576–Ser749. Residue Gly589–Ser596 participates in ATP binding. A DEAH box motif is present at residues Asp696–His699. In terms of domain architecture, Helicase C-terminal spans Asp852–Asp1021.

It belongs to the DEAD box helicase family. DEAH subfamily. As to quaternary structure, part of the 43S pre-initiation complex (PIC).

It is found in the cytoplasm. The catalysed reaction is ATP + H2O = ADP + phosphate + H(+). In terms of biological role, ATP-binding RNA helicase involved in translation initiation. Part of the 43S pre-initiation complex that is required for efficient initiation on mRNAs of higher eukaryotes with structured 5'-UTRs by promoting efficient NTPase-dependent 48S complex formation. Specifically binds to the 40S ribosome near the mRNA entrance. Does not possess a processive helicase activity. This is ATP-dependent RNA helicase dhx29 from Xenopus laevis (African clawed frog).